Consider the following 1407-residue polypeptide: DNA-directed RNA polymerase subunit beta' (1407 aa).

The Zn(2+) site is built by Cys-70, Cys-72, Cys-85, and Cys-88. Asp-458, Asp-460, and Asp-462 together coordinate Mg(2+). Residues Cys-814, Cys-888, Cys-895, and Cys-898 each contribute to the Zn(2+) site.

The protein belongs to the RNA polymerase beta' chain family. In terms of assembly, the RNAP catalytic core consists of 2 alpha, 1 beta, 1 beta' and 1 omega subunit. When a sigma factor is associated with the core the holoenzyme is formed, which can initiate transcription. Mg(2+) is required as a cofactor. The cofactor is Zn(2+).

The enzyme catalyses RNA(n) + a ribonucleoside 5'-triphosphate = RNA(n+1) + diphosphate. In terms of biological role, DNA-dependent RNA polymerase catalyzes the transcription of DNA into RNA using the four ribonucleoside triphosphates as substrates. This chain is DNA-directed RNA polymerase subunit beta', found in Leptothrix cholodnii (strain ATCC 51168 / LMG 8142 / SP-6) (Leptothrix discophora (strain SP-6)).